A 642-amino-acid polypeptide reads, in one-letter code: Threonine--tRNA ligase (642 aa).

The region spanning 1 to 61 is the TGS domain; it reads MPVITLPDGS…ENDAQLAIIT (61 aa). Positions 243–534 are catalytic; sequence DHRKIGKQLD…LTEEFAGFFP (292 aa). The residue at position 286 (K286) is an N6-acetyllysine. Zn(2+) contacts are provided by C334, H385, and H511.

The protein belongs to the class-II aminoacyl-tRNA synthetase family. As to quaternary structure, homodimer. It depends on Zn(2+) as a cofactor.

The protein localises to the cytoplasm. It catalyses the reaction tRNA(Thr) + L-threonine + ATP = L-threonyl-tRNA(Thr) + AMP + diphosphate + H(+). Functionally, catalyzes the attachment of threonine to tRNA(Thr) in a two-step reaction: L-threonine is first activated by ATP to form Thr-AMP and then transferred to the acceptor end of tRNA(Thr). Also edits incorrectly charged L-seryl-tRNA(Thr). In Escherichia fergusonii (strain ATCC 35469 / DSM 13698 / CCUG 18766 / IAM 14443 / JCM 21226 / LMG 7866 / NBRC 102419 / NCTC 12128 / CDC 0568-73), this protein is Threonine--tRNA ligase.